A 179-amino-acid chain; its full sequence is Small ribosomal subunit protein eS10x (179 aa).

Residues 90–179 (TLKKSAKPGG…AAAPSGSGLP (90 aa)) are disordered. The span at 108–129 (DRSRGPRHEGGDRPRFGDRDGY) shows a compositional bias: basic and acidic residues. The span at 134-144 (RAGGEFGGEKG) shows a compositional bias: gly residues. Over residues 145-156 (GAPADYQPSFQG) the composition is skewed to low complexity. Gly residues predominate over residues 157-167 (SGRGFGRGAGG). The span at 168-179 (YSAAAPSGSGLP) shows a compositional bias: low complexity.

The protein belongs to the eukaryotic ribosomal protein eS10 family.

The protein localises to the cytoplasm. The protein is Small ribosomal subunit protein eS10x (RPS10C) of Arabidopsis thaliana (Mouse-ear cress).